The sequence spans 306 residues: 1-aminocyclopropane-1-carboxylate oxidase (306 aa).

Positions 153-253 (PFFGTKVSHY…RRSIASFYNP (101 aa)) constitute a Fe2OG dioxygenase domain. Fe cation contacts are provided by H177, D179, and H234.

This sequence belongs to the iron/ascorbate-dependent oxidoreductase family. Requires Fe cation as cofactor.

It carries out the reaction 1-aminocyclopropane-1-carboxylate + L-ascorbate + O2 = ethene + L-dehydroascorbate + hydrogen cyanide + CO2 + 2 H2O. It functions in the pathway alkene biosynthesis; ethylene biosynthesis via S-adenosyl-L-methionine; ethylene from S-adenosyl-L-methionine: step 2/2. This is 1-aminocyclopropane-1-carboxylate oxidase (MAO1B) from Musa acuminata (Banana).